A 244-amino-acid chain; its full sequence is Ribonuclease 3 2 (244 aa).

One can recognise an RNase III domain in the interval leucine 11–glycine 136. Position 50 (glutamate 50) interacts with Mg(2+). Aspartate 54 is an active-site residue. Mg(2+) contacts are provided by aspartate 122 and glutamate 125. Residue glutamate 125 is part of the active site. The 71-residue stretch at asparagine 164–alanine 234 folds into the DRBM domain.

The protein belongs to the ribonuclease III family. Homodimer. It depends on Mg(2+) as a cofactor.

It is found in the cytoplasm. The enzyme catalyses Endonucleolytic cleavage to 5'-phosphomonoester.. In terms of biological role, digests double-stranded RNA. Involved in the processing of primary rRNA transcript to yield the immediate precursors to the large and small rRNAs (23S and 16S). Processes some mRNAs, and tRNAs when they are encoded in the rRNA operon. Processes pre-crRNA and tracrRNA of type II CRISPR loci if present in the organism. The polypeptide is Ribonuclease 3 2 (Synechocystis sp. (strain ATCC 27184 / PCC 6803 / Kazusa)).